We begin with the raw amino-acid sequence, 415 residues long: Lipoyl synthase, mitochondrial (415 aa).

The N-terminal 32 residues, 1 to 32 (MAASTNRLRFLYSSARTVPQTGSITPISRRTY), are a transit peptide targeting the mitochondrion. The span at 22 to 32 (GSITPISRRTY) shows a compositional bias: polar residues. Residues 22–53 (GSITPISRRTYATTEPSPSATGAPATARKRTN) are disordered. The segment covering 33–47 (ATTEPSPSATGAPAT) has biased composition (low complexity). Residues Cys132, Cys137, Cys143, Cys163, Cys167, Cys170, and Ser378 each contribute to the [4Fe-4S] cluster site. Positions 146-367 (GSDKSAATAT…RQRALDMGFL (222 aa)) constitute a Radical SAM core domain. The segment at 395–415 (AAGTAGESVTDSKAAVDEATR) is disordered.

Belongs to the radical SAM superfamily. Lipoyl synthase family. Requires [4Fe-4S] cluster as cofactor.

The protein localises to the mitochondrion. The catalysed reaction is [[Fe-S] cluster scaffold protein carrying a second [4Fe-4S](2+) cluster] + N(6)-octanoyl-L-lysyl-[protein] + 2 oxidized [2Fe-2S]-[ferredoxin] + 2 S-adenosyl-L-methionine + 4 H(+) = [[Fe-S] cluster scaffold protein] + N(6)-[(R)-dihydrolipoyl]-L-lysyl-[protein] + 4 Fe(3+) + 2 hydrogen sulfide + 2 5'-deoxyadenosine + 2 L-methionine + 2 reduced [2Fe-2S]-[ferredoxin]. Its pathway is protein modification; protein lipoylation via endogenous pathway; protein N(6)-(lipoyl)lysine from octanoyl-[acyl-carrier-protein]: step 2/2. Functionally, catalyzes the radical-mediated insertion of two sulfur atoms into the C-6 and C-8 positions of the octanoyl moiety bound to the lipoyl domains of lipoate-dependent enzymes, thereby converting the octanoylated domains into lipoylated derivatives. In Aspergillus oryzae (strain ATCC 42149 / RIB 40) (Yellow koji mold), this protein is Lipoyl synthase, mitochondrial.